Reading from the N-terminus, the 690-residue chain is Long-chain fatty acid transport protein 5 (690 aa).

The Cytoplasmic portion of the chain corresponds to 1–30 (MGVRQQLALLLLLLLLLWGLGQPVWPVAVA). A run of 2 helical transmembrane segments spans residues 31 to 51 (LTLRWLLGDPTCCVLLGLAML) and 56 to 76 (LGPWVPHGLSLAAAALALTLL). Residues 77–690 (PARLPPGLRW…QAVCEGTWRL (614 aa)) lie on the Cytoplasmic side of the membrane. Residue 292–303 (FIYTSGTTGLPK) coordinates AMP. Position 501 is a phosphoserine (Ser501).

This sequence belongs to the ATP-dependent AMP-binding enzyme family. Predominantly expressed in liver.

The protein resides in the endoplasmic reticulum membrane. It localises to the microsome. It is found in the cell membrane. The enzyme catalyses a fatty acid(in) = a fatty acid(out). It catalyses the reaction cholate + ATP + CoA = choloyl-CoA + AMP + diphosphate. It carries out the reaction chenodeoxycholate + ATP + CoA = chenodeoxycholoyl-CoA + AMP + diphosphate. The catalysed reaction is deoxycholate + ATP + CoA = deoxycholoyl-CoA + AMP + diphosphate. The enzyme catalyses lithocholate + ATP + CoA = lithocholoyl-CoA + AMP + diphosphate. It catalyses the reaction (25R)-3alpha,7alpha,12alpha-trihydroxy-5beta-cholestan-26-oate + ATP + CoA = (25R)-3alpha,7alpha,12alpha-trihydroxy-5beta-cholestan-26-oyl-CoA + AMP + diphosphate. It carries out the reaction a very long-chain fatty acid + ATP + CoA = a very long-chain fatty acyl-CoA + AMP + diphosphate. The catalysed reaction is tetracosanoate + ATP + CoA = tetracosanoyl-CoA + AMP + diphosphate. The enzyme catalyses hexacosanoate + ATP + CoA = hexacosanoyl-CoA + AMP + diphosphate. It catalyses the reaction a long-chain fatty acid + ATP + CoA = a long-chain fatty acyl-CoA + AMP + diphosphate. It carries out the reaction octadecanoate + ATP + CoA = octadecanoyl-CoA + AMP + diphosphate. The catalysed reaction is eicosanoate + ATP + CoA = eicosanoyl-CoA + AMP + diphosphate. Its activity is regulated as follows. 3-alpha,7-alpha,12-alpha-trihydroxy-5-beta-cholestanate (THCA) inhibits the activation of cholate. Functionally, may mediate the import of long-chain fatty acids (LCFA) by facilitating their transport across cell membranes. Also catalyzes the ATP-dependent formation of fatty acyl-CoA using LCFA and very-long-chain fatty acids (VLCFA) as substrates. Mainly functions as a bile acyl-CoA synthetase catalyzing the activation of bile acids via ATP-dependent formation of bile acid CoA thioesters which is necessary for their subsequent conjugation with glycine or taurine. Both primary bile acids (cholic acid and chenodeoxycholic acid) and secondary bile acids (deoxycholic acid and lithocholic acid) are the principal substrates. In vitro, activates 3-alpha,7-alpha,12-alpha-trihydroxy-5-beta-cholestanate ((25R)-3alpha,7alpha,12alpha-trihydroxy-5beta-cholestan-26-oate or THCA), the C27 precursor of cholic acid deriving from the de novo synthesis from cholesterol. Plays an important role in hepatic fatty acid uptake and bile acid reconjugation and recycling but not in de novo synthesis of bile acids. This chain is Long-chain fatty acid transport protein 5 (SLC27A5), found in Homo sapiens (Human).